Reading from the N-terminus, the 560-residue chain is Synaptotagmin-5 (560 aa).

Residues 2–22 form a helical membrane-spanning segment; that stretch reads GFIVGVVIGLLVGIAIIIGFV. In terms of domain architecture, SMP-LTD spans 67-249; the sequence is ERQKLTWLNH…WPVRKVIPII (183 aa). Positions 227-523 are phospholipid binding; sequence EETIRDAVED…YIGRCILTLT (297 aa). 2 consecutive C2 domains span residues 243–364 and 417–535; these read RKVI…DVWL and TTDE…KDWY. Ca(2+) is bound by residues Asp278, Asp284, Asp334, Glu336, Asp451, Asp457, Asp506, Asp508, and Asp513.

It belongs to the synaptotagmin family. It depends on Ca(2+) as a cofactor.

The protein resides in the membrane. Functionally, may be involved in membrane trafficking. The sequence is that of Synaptotagmin-5 (SYT5) from Arabidopsis thaliana (Mouse-ear cress).